We begin with the raw amino-acid sequence, 176 residues long: Endoribonuclease YbeY (176 aa).

Histidine 117, histidine 121, and histidine 127 together coordinate Zn(2+).

It belongs to the endoribonuclease YbeY family. Zn(2+) is required as a cofactor.

The protein localises to the cytoplasm. Functionally, single strand-specific metallo-endoribonuclease involved in late-stage 70S ribosome quality control and in maturation of the 3' terminus of the 16S rRNA. The chain is Endoribonuclease YbeY from Methylocella silvestris (strain DSM 15510 / CIP 108128 / LMG 27833 / NCIMB 13906 / BL2).